The chain runs to 1493 residues: Mediator of RNA polymerase II transcription subunit 14 (1493 aa).

Disordered regions lie at residues 1 to 51, 71 to 110, 408 to 427, 674 to 693, 894 to 913, and 957 to 997; these read MPSS…YHAA, MIGV…SAKG, TEQG…APTV, QRPR…RSAS, EAGT…NDVD, and GSNT…SSDD. Positions 90-100 are enriched in basic and acidic residues; that stretch reads PDSKQSSDADG.

The protein belongs to the Mediator complex subunit 14 family. In terms of assembly, component of the Mediator complex.

The protein resides in the nucleus. Component of the Mediator complex, a coactivator involved in the regulated transcription of nearly all RNA polymerase II-dependent genes. Mediator functions as a bridge to convey information from gene-specific regulatory proteins to the basal RNA polymerase II transcription machinery. Mediator is recruited to promoters by direct interactions with regulatory proteins and serves as a scaffold for the assembly of a functional preinitiation complex with RNA polymerase II and the general transcription factors. This chain is Mediator of RNA polymerase II transcription subunit 14 (RGR1), found in Mycosarcoma maydis (Corn smut fungus).